A 500-amino-acid chain; its full sequence is Lysine--tRNA ligase (500 aa).

Mg(2+) contacts are provided by Glu410 and Glu417.

The protein belongs to the class-II aminoacyl-tRNA synthetase family. As to quaternary structure, homodimer. Mg(2+) serves as cofactor.

It is found in the cytoplasm. The catalysed reaction is tRNA(Lys) + L-lysine + ATP = L-lysyl-tRNA(Lys) + AMP + diphosphate. In Pseudomonas entomophila (strain L48), this protein is Lysine--tRNA ligase.